A 546-amino-acid chain; its full sequence is Chaperonin GroEL (546 aa).

Residues Thr29–Pro32, Lys50, Asp86–Thr90, Gly414, Asn477–Leu479, and Asp493 each bind ATP.

It belongs to the chaperonin (HSP60) family. In terms of assembly, forms a cylinder of 14 subunits composed of two heptameric rings stacked back-to-back. Interacts with the co-chaperonin GroES.

The protein localises to the cytoplasm. The enzyme catalyses ATP + H2O + a folded polypeptide = ADP + phosphate + an unfolded polypeptide.. Together with its co-chaperonin GroES, plays an essential role in assisting protein folding. The GroEL-GroES system forms a nano-cage that allows encapsulation of the non-native substrate proteins and provides a physical environment optimized to promote and accelerate protein folding. The protein is Chaperonin GroEL of Leptospira interrogans serogroup Icterohaemorrhagiae serovar Lai (strain 56601).